The sequence spans 326 residues: Putative HTH-type transcriptional regulatory protein MmarC7_1702 (326 aa).

In terms of domain architecture, HTH cro/C1-type spans 128-183; it reads LRETREKLKISVGELAEISRVSRKTIYKYEQNEANPSAEVAIKIEEYLDVPLIKGI. The segment at residues 139-158 is a DNA-binding region (H-T-H motif); it reads VGELAEISRVSRKTIYKYEQ.

In Methanococcus maripaludis (strain C7 / ATCC BAA-1331), this protein is Putative HTH-type transcriptional regulatory protein MmarC7_1702.